A 401-amino-acid polypeptide reads, in one-letter code: Methionyl-tRNA formyltransferase, mitochondrial (401 aa).

A mitochondrion-targeting transit peptide spans 1 to 26 (MVKMRRITPTRLLFTCRYISNNASPP). (6R)-10-formyltetrahydrofolate is bound by residues 18–20 (YIS) and 66–70 (VVTRS).

This sequence belongs to the Fmt family. Phosphorylated by GCN2 in response to nutrient deprivation. Phosphorylation mediates retention of FMT1 in the cytoplasm.

It is found in the mitochondrion. It localises to the mitochondrion matrix. Its subcellular location is the cytoplasm. It carries out the reaction L-methionyl-tRNA(fMet) + (6R)-10-formyltetrahydrofolate = N-formyl-L-methionyl-tRNA(fMet) + (6S)-5,6,7,8-tetrahydrofolate + H(+). In terms of biological role, formylates methionyl-tRNA in mitochondria and the cytoplasm. Responsible for the formylation of the 8 N-terminally formylated (Nt-formylated) mitochondrial matrix proteins that are encoded by mitochondrial DNA. Nt-formylated proteins in the cytoplasm are strongly up-regulated in stationary phase or upon starvation for specific amino acids (His or Lys) and are targeted for degradation by a PSH1 E3 ubiquitin ligase-mediated fMet/N-end rule pathway. Increased Nt-formylation of cytosolic proteins appears to be important for adaptation to these stresses. Stationary phase-degraded Nt-formylated proteins include histone H3-like centromeric protein CSE4, Mediator complex subunit 3 (PGD1) and small ribosomal subunit protein uS8-A (RPS22A). The protein is Methionyl-tRNA formyltransferase, mitochondrial (FMT1) of Saccharomyces cerevisiae (strain ATCC 204508 / S288c) (Baker's yeast).